The sequence spans 350 residues: Protein Wnt-8b (350 aa).

The N-terminal stretch at 1-21 (MFLMKPVCVLLVTCVLHRSHA) is a signal peptide. A disulfide bond links cysteine 53 and cysteine 64. Asparagine 102 carries an N-linked (GlcNAc...) asparagine glycan. 10 cysteine pairs are disulfide-bonded: cysteine 103–cysteine 111, cysteine 113–cysteine 131, cysteine 179–cysteine 193, cysteine 181–cysteine 188, cysteine 255–cysteine 293, cysteine 271–cysteine 286, cysteine 290–cysteine 332, cysteine 308–cysteine 323, cysteine 310–cysteine 320, and cysteine 315–cysteine 316. Serine 185 carries the O-palmitoleoyl serine lipid modification. Residue asparagine 258 is glycosylated (N-linked (GlcNAc...) asparagine).

The protein belongs to the Wnt family. Post-translationally, palmitoleoylation is required for efficient binding to frizzled receptors. Depalmitoleoylation leads to Wnt signaling pathway inhibition. In terms of processing, proteolytic processing by TIKI1 and TIKI2 promotes oxidation and formation of large disulfide-bond oligomers, leading to inactivation of WNT8B.

It localises to the secreted. The protein resides in the extracellular space. The protein localises to the extracellular matrix. In terms of biological role, ligand for members of the frizzled family of seven transmembrane receptors. May play an important role in the development and differentiation of certain forebrain structures, notably the hippocampus. This is Protein Wnt-8b (Wnt8b) from Mus musculus (Mouse).